Reading from the N-terminus, the 150-residue chain is UPF0756 membrane protein HD_1071 (150 aa).

A run of 4 helical transmembrane segments spans residues 1–21 (MSLQFNPIGLFLVALILLGVL), 52–72 (YGLTIGIIILTIGVLSPIVSG), 82–102 (ILSWKMALAISIGIFVAWLGG), and 114–134 (IITGLLIGTIIGIAFFGGIPV).

It belongs to the UPF0756 family.

Its subcellular location is the cell membrane. The chain is UPF0756 membrane protein HD_1071 from Haemophilus ducreyi (strain 35000HP / ATCC 700724).